The chain runs to 215 residues: UPF0502 protein YceH (215 aa).

It belongs to the UPF0502 family.

The sequence is that of UPF0502 protein YceH from Salmonella arizonae (strain ATCC BAA-731 / CDC346-86 / RSK2980).